The following is a 219-amino-acid chain: 7-cyano-7-deazaguanine synthase (219 aa).

ATP is bound at residue 10–20 (FSGGQDSTTCL). Cys-188, Cys-197, Cys-200, and Cys-203 together coordinate Zn(2+).

It belongs to the QueC family. In terms of assembly, homodimer. The cofactor is Zn(2+).

It carries out the reaction 7-carboxy-7-deazaguanine + NH4(+) + ATP = 7-cyano-7-deazaguanine + ADP + phosphate + H2O + H(+). It participates in purine metabolism; 7-cyano-7-deazaguanine biosynthesis. Its function is as follows. Catalyzes the ATP-dependent conversion of 7-carboxy-7-deazaguanine (CDG) to 7-cyano-7-deazaguanine (preQ(0)). The chain is 7-cyano-7-deazaguanine synthase from Clostridium botulinum (strain 657 / Type Ba4).